A 342-amino-acid chain; its full sequence is N-acetyl-gamma-glutamyl-phosphate reductase (342 aa).

Cys147 is a catalytic residue.

It belongs to the NAGSA dehydrogenase family. Type 1 subfamily.

The protein localises to the cytoplasm. The catalysed reaction is N-acetyl-L-glutamate 5-semialdehyde + phosphate + NADP(+) = N-acetyl-L-glutamyl 5-phosphate + NADPH + H(+). It functions in the pathway amino-acid biosynthesis; L-arginine biosynthesis; N(2)-acetyl-L-ornithine from L-glutamate: step 3/4. Its function is as follows. Catalyzes the NADPH-dependent reduction of N-acetyl-5-glutamyl phosphate to yield N-acetyl-L-glutamate 5-semialdehyde. The sequence is that of N-acetyl-gamma-glutamyl-phosphate reductase from Campylobacter jejuni subsp. doylei (strain ATCC BAA-1458 / RM4099 / 269.97).